Reading from the N-terminus, the 639-residue chain is MSGVPAVNISIESSAEKQVQEVGLDGSETYVLPLSMSQNLARLAQRIDFSQESGEEEAEAARELEWAEQEEEEGLVKFQPSLWPWDSVRNNLRSTLTEMCVLYDVLNIVKEKRYMHLDPVSQEALPPKPNQHGLLLVSKKKSLAAAAQILLKGAERLSKSVAENQENKRQRDFNSELLRLRQHWKLRKLGDKILGDLSYRSAGSLFPHHGTFEVIKNTDIDLDKKMPEDYCPLDVHIPSDLEGSAYLKVSIQKQAPDIGDLGTVNLFRRPLPKAKPGTPHWQTRLEAAQNVLLCKEVFAQLSREAVQIKSQIPHIVVKNQIISQPFPGLQLSISLCHSSNDKKSQKSNSDKMGAEDHLYVLEHNLHQLIREFHKQTLSNIVMPHPASAPFGHKRMRLAGPQAFDKNEMGFMQQNEGLLEKIIKQAKHIFLRRRTARTIDSLASRIEDPQIQAHWSSINDVYESSVKVLITSQGYEQICKSIQLQLNIGVDQIRVVHRDGRVITLSHQEQELQDFLLSQMSQHQVLAVQQLAKVMGWHVLSFTNHVGLGQVESVGNASSITVTSPNGDYAISVRNGPESGTKVMVQFPRSQCKDLPKGDVLQENKWQYLRGPYKEVQWNKMEGRNFVYKMELLMAALTPC.

Belongs to the Mediator complex subunit 17 family. In terms of assembly, component of the Mediator complex.

It localises to the nucleus. Component of the Mediator complex, a coactivator involved in the regulated transcription of nearly all RNA polymerase II-dependent genes. Mediator functions as a bridge to convey information from gene-specific regulatory proteins to the basal RNA polymerase II transcription machinery. Mediator is recruited to promoters by direct interactions with regulatory proteins and serves as a scaffold for the assembly of a functional preinitiation complex with RNA polymerase II and the general transcription factors. This is Mediator of RNA polymerase II transcription subunit 17 (med17) from Xenopus tropicalis (Western clawed frog).